The following is a 639-amino-acid chain: Bone morphogenetic protein 1 homolog (639 aa).

Positions 1–23 (MDLLYYMTVSLLGFILSLTTFIG) are cleaved as a signal peptide. Positions 24–109 (ETTRALSDDV…RAVTARPERR (86 aa)) are excised as a propeptide. In terms of domain architecture, Peptidase M12A spans 100-305 (RAVTARPERR…IQANLLYKCP (206 aa)). N-linked (GlcNAc...) asparagine glycosylation is found at Asn-122 and Asn-140. Disulfide bonds link Cys-143-Cys-304, Cys-167-Cys-189, Cys-169-Cys-170, Cys-307-Cys-333, Cys-360-Cys-382, and Cys-420-Cys-446. His-197 contributes to the Zn(2+) binding site. The active site involves Glu-198. Positions 201 and 207 each coordinate Zn(2+). 2 consecutive CUB domains span residues 307–419 (CGRT…YEAI) and 420–531 (CGGH…DFFK). Asn-317 carries an N-linked (GlcNAc...) asparagine glycan. N-linked (GlcNAc...) asparagine glycosylation is present at Asn-455. 4 disulfides stabilise this stretch: Cys-473/Cys-495, Cys-536/Cys-548, Cys-544/Cys-557, and Cys-559/Cys-572. The EGF-like; calcium-binding domain maps to 532 to 573 (EKDECAQPDQGGCMDVCVNTIGSYRCDCRPGYELSSDGRRCE).

The cofactor is Zn(2+). Ectodermal and primary mesenchyme cells in hatched blastula.

This chain is Bone morphogenetic protein 1 homolog, found in Strongylocentrotus purpuratus (Purple sea urchin).